A 903-amino-acid chain; its full sequence is Translation initiation factor IF-2 (903 aa).

Disordered regions lie at residues 57-171 (EKFK…QRRR) and 267-318 (PTPQ…EAVT). Over residues 69–163 (KKEAKEPSEK…SEPQKPKESL (95 aa)) the composition is skewed to basic and acidic residues. The span at 267 to 278 (PTPQPMQKTKQP) shows a compositional bias: low complexity. A compositionally biased stretch (basic residues) spans 299–308 (RRARKKHKKP). Positions 402 to 569 (PRAPVITIMG…IVLLQAEILE (168 aa)) constitute a tr-type G domain. Residues 411 to 418 (GHVDHGKT) form a G1 region. Residue 411–418 (GHVDHGKT) coordinates GTP. A G2 region spans residues 436–440 (GITQH). Residues 457–460 (DTPG) form a G3 region. GTP-binding positions include 457–461 (DTPGH) and 511–514 (NKMD). The segment at 511–514 (NKMD) is G4. Positions 547–549 (SAK) are G5.

Belongs to the TRAFAC class translation factor GTPase superfamily. Classic translation factor GTPase family. IF-2 subfamily.

It localises to the cytoplasm. In terms of biological role, one of the essential components for the initiation of protein synthesis. Protects formylmethionyl-tRNA from spontaneous hydrolysis and promotes its binding to the 30S ribosomal subunits. Also involved in the hydrolysis of GTP during the formation of the 70S ribosomal complex. The chain is Translation initiation factor IF-2 from Campylobacter curvus (strain 525.92).